The chain runs to 302 residues: RNA polymerase II holoenzyme cyclin-like subunit (302 aa).

The Cyclin N-terminal domain maps to 53 to 142 (QQLIKLGKRM…LGECEFSLIS (90 aa)).

The protein belongs to the cyclin family. Cyclin C subfamily. Component of the srb8-11 complex, a regulatory module of the Mediator complex.

The protein resides in the nucleus. In terms of biological role, component of the srb8-11 complex. The srb8-11 complex is a regulatory module of the Mediator complex which is itself involved in regulation of basal and activated RNA polymerase II-dependent transcription. The srb8-11 complex may be involved in the transcriptional repression of a subset of genes regulated by Mediator. It may inhibit the association of the Mediator complex with RNA polymerase II to form the holoenzyme complex. The srb8-11 complex phosphorylates the C-terminal domain (CTD) of the largest subunit of RNA polymerase II. The sequence is that of RNA polymerase II holoenzyme cyclin-like subunit (ssn8) from Aspergillus fumigatus (strain ATCC MYA-4609 / CBS 101355 / FGSC A1100 / Af293) (Neosartorya fumigata).